Consider the following 289-residue polypeptide: Phospholipase A1 (289 aa).

An N-terminal signal peptide occupies residues 1–20 (MRAILRGLLPATLLPLAAYA). At 21–52 (QEATIKEVHDAPAVRGSIIANMLQEHDNPFTL) the chain is on the periplasmic side. A beta stranded membrane pass occupies residues 53 to 65 (YPYDTNYLIYTNT). Topologically, residues 66 to 84 (SDLNKEAISTYNWSENARK) are extracellular. The chain crosses the membrane as a beta stranded span at residues 85–99 (DEVKFQLSLAFPLWR). Residues 100-105 (GILGPN) lie on the Periplasmic side of the membrane. Residues 106-118 (SVLGASYTQKSWW) form a beta stranded membrane-spanning segment. Over 119–128 (QLSNSKESSP) the chain is Extracellular. Residue S126 coordinates Ca(2+). The beta stranded transmembrane segment at 129–148 (FRETNYEPQLFLGFATDYRF) threads the bilayer. Over 149–150 (AG) the chain is Periplasmic. A beta stranded membrane pass occupies residues 151–164 (WTLRDVEMGYNHDS). Catalysis depends on H162, which acts as the Proton acceptor. S164 serves as the catalytic Nucleophile. At 165–173 (NGRSDPTSR) the chain is on the extracellular side. R167 and S172 together coordinate Ca(2+). Residues 174-186 (SWNRLYTRLMAEN) form a beta stranded membrane-spanning segment. The Periplasmic segment spans residues 187–188 (GN). The beta stranded transmembrane segment at 189 to 198 (WLVEVKPWYV) threads the bilayer. Topologically, residues 199 to 216 (IGSTDDNPDITKYMGYYQ) are extracellular. D204 provides a ligand contact to Ca(2+). A beta stranded membrane pass occupies residues 217–223 (LKIGYHL). Topologically, residues 224-225 (GE) are periplasmic. Residues 226 to 234 (AVLSAKGQY) traverse the membrane as a beta stranded segment. Over 235–241 (NWNTGYG) the chain is Extracellular. The chain crosses the membrane as a beta stranded span at residues 242–250 (GAEVGLSYP). The Periplasmic portion of the chain corresponds to 251–255 (VTKHV). The chain crosses the membrane as a beta stranded span at residues 256 to 265 (RLYTQVYSGY). The Extracellular portion of the chain corresponds to 266–274 (GESLIDYNF). A beta stranded transmembrane segment spans residues 275–286 (NQTRVGVGVMLN). The Periplasmic segment spans residues 287–289 (DIF).

Belongs to the phospholipase A1 family. Homodimer; dimerization is reversible, and the dimeric form is the active one. Ca(2+) is required as a cofactor.

Its subcellular location is the cell outer membrane. The enzyme catalyses a 1,2-diacyl-sn-glycero-3-phosphocholine + H2O = a 2-acyl-sn-glycero-3-phosphocholine + a fatty acid + H(+). The catalysed reaction is a 1,2-diacyl-sn-glycero-3-phosphocholine + H2O = a 1-acyl-sn-glycero-3-phosphocholine + a fatty acid + H(+). Its function is as follows. Hydrolysis of phosphatidylcholine with phospholipase A2 (EC 3.1.1.4) and phospholipase A1 (EC 3.1.1.32) activities. In Salmonella typhi, this protein is Phospholipase A1 (pldA).